The sequence spans 355 residues: Ion-translocating oxidoreductase complex subunit D (355 aa).

The next 4 membrane-spanning stretches (helical) occupy residues 23–43 (WVAL…GWGT), 44–64 (LVQL…VMLF), 78–109 (ALVT…IVIA), and 129–149 (VVLL…LPLI). Position 194 is an FMN phosphoryl threonine (T194). 5 consecutive transmembrane segments (helical) span residues 221-241 (FAGV…LILL), 250-270 (IPVG…LFFP), 273-293 (TASP…FFIA), 307-327 (ILFG…GGFP), and 328-348 (DGVA…DYYT).

Belongs to the NqrB/RnfD family. The complex is composed of six subunits: RnfA, RnfB, RnfC, RnfD, RnfE and RnfG. Requires FMN as cofactor.

The protein localises to the cell inner membrane. Its function is as follows. Part of a membrane-bound complex that couples electron transfer with translocation of ions across the membrane. In Vibrio vulnificus (strain CMCP6), this protein is Ion-translocating oxidoreductase complex subunit D.